The primary structure comprises 297 residues: Acetylglutamate kinase (297 aa).

Residues 73–74 (GG), Arg95, and Asn188 contribute to the substrate site.

It belongs to the acetylglutamate kinase family. ArgB subfamily.

Its subcellular location is the cytoplasm. It catalyses the reaction N-acetyl-L-glutamate + ATP = N-acetyl-L-glutamyl 5-phosphate + ADP. It functions in the pathway amino-acid biosynthesis; L-arginine biosynthesis; N(2)-acetyl-L-ornithine from L-glutamate: step 2/4. In terms of biological role, catalyzes the ATP-dependent phosphorylation of N-acetyl-L-glutamate. The polypeptide is Acetylglutamate kinase (Nostoc sp. (strain PCC 7120 / SAG 25.82 / UTEX 2576)).